We begin with the raw amino-acid sequence, 235 residues long: PRA1 family protein 1 (235 aa).

Residues 1 to 17 (MESNSNSNETMYGNPNI) show a composition bias toward polar residues. Residues 1 to 55 (MESNSNSNETMYGNPNINMGFVDSGNSNIGNNTGSMSPPPQQQQQPQQASSTPAG) form a disordered region. The segment covering 24-48 (SGNSNIGNNTGSMSPPPQQQQQPQQ) has biased composition (low complexity). 2 helical membrane-spanning segments follow: residues 144–164 (SVFFIITNPFYLLLLGVLLFI) and 187–207 (AFLSIYFLLYAGSSIFWLVGA).

This sequence belongs to the PRA1 family.

The protein resides in the membrane. Functionally, may act as a general Rab protein regulator. This is PRA1 family protein 1 (prafA) from Dictyostelium discoideum (Social amoeba).